The chain runs to 594 residues: Probable pectinesterase/pectinesterase inhibitor 33 (594 aa).

An N-terminal signal peptide occupies residues 1 to 22 (MLRGIFHICLLASFLLLPFSSA). The interval 28–75 (FTGGTDAPPPWDHNVSPPPETAPSPTPTSSPSTTSPPSPGPVAAPSPI) is disordered. Residues 34 to 71 (APPPWDHNVSPPPETAPSPTPTSSPSTTSPPSPGPVAA) are compositionally biased toward pro residues. Residues asparagine 77, asparagine 170, asparagine 213, and asparagine 226 are each glycosylated (N-linked (GlcNAc...) asparagine). Residues 78-237 (GSVSGDMTWW…SDLIGNCLAV (160 aa)) are pectinesterase inhibitor 33. Positions 280-581 (HLVVAQDRSG…TVGSLIAGGS (302 aa)) are pectinesterase 33. Residues threonine 356 and glutamine 386 each coordinate substrate. The Proton donor; for pectinesterase activity role is filled by aspartate 409. An intrachain disulfide couples cysteine 423 to cysteine 443. Aspartate 430 serves as the catalytic Nucleophile; for pectinesterase activity. Residues arginine 498 and tryptophan 500 each contribute to the substrate site.

It in the N-terminal section; belongs to the PMEI family. In the C-terminal section; belongs to the pectinesterase family. In terms of tissue distribution, expressed in siliques.

It is found in the secreted. Its subcellular location is the cell wall. It carries out the reaction [(1-&gt;4)-alpha-D-galacturonosyl methyl ester](n) + n H2O = [(1-&gt;4)-alpha-D-galacturonosyl](n) + n methanol + n H(+). It participates in glycan metabolism; pectin degradation; 2-dehydro-3-deoxy-D-gluconate from pectin: step 1/5. Acts in the modification of cell walls via demethylesterification of cell wall pectin. This is Probable pectinesterase/pectinesterase inhibitor 33 (PME33) from Arabidopsis thaliana (Mouse-ear cress).